Consider the following 404-residue polypeptide: Cysteine desulfurase IscS (404 aa).

Pyridoxal 5'-phosphate is bound by residues 75-76, Asn-155, Gln-183, and 203-205; these read AT and SAH. Lys-206 is subject to N6-(pyridoxal phosphate)lysine. Position 243 (Thr-243) interacts with pyridoxal 5'-phosphate. The Cysteine persulfide intermediate role is filled by Cys-328. Position 328 (Cys-328) interacts with [2Fe-2S] cluster.

It belongs to the class-V pyridoxal-phosphate-dependent aminotransferase family. NifS/IscS subfamily. As to quaternary structure, homodimer. Forms a heterotetramer with IscU, interacts with other sulfur acceptors. The cofactor is pyridoxal 5'-phosphate.

The protein resides in the cytoplasm. It catalyses the reaction (sulfur carrier)-H + L-cysteine = (sulfur carrier)-SH + L-alanine. Its pathway is cofactor biosynthesis; iron-sulfur cluster biosynthesis. Functionally, master enzyme that delivers sulfur to a number of partners involved in Fe-S cluster assembly, tRNA modification or cofactor biosynthesis. Catalyzes the removal of elemental sulfur atoms from cysteine to produce alanine. Functions as a sulfur delivery protein for Fe-S cluster synthesis onto IscU, an Fe-S scaffold assembly protein, as well as other S acceptor proteins. The polypeptide is Cysteine desulfurase IscS (Ectopseudomonas mendocina (strain ymp) (Pseudomonas mendocina)).